The sequence spans 169 residues: uncharacterized protein (169 aa).

It is found in the mitochondrion. This is an uncharacterized protein from Marchantia polymorpha (Common liverwort).